The following is a 113-amino-acid chain: Translation initiation factor IF-1, chloroplastic (113 aa).

The S1-like domain maps to 8–83 (REKKNPREAK…SKGRIIYRLP (76 aa)). The interval 86–113 (DSKRIEDSKDSEDLKDSEDLKDTKDSKD) is disordered.

The protein belongs to the IF-1 family. As to quaternary structure, component of the 30S ribosomal translation pre-initiation complex which assembles on the 30S ribosome in the order IF-2 and IF-3, IF-1 and N-formylmethionyl-tRNA(fMet); mRNA recruitment can occur at any time during PIC assembly.

The protein localises to the plastid. It is found in the chloroplast. Functionally, one of the essential components for the initiation of protein synthesis. Stabilizes the binding of IF-2 and IF-3 on the 30S subunit to which N-formylmethionyl-tRNA(fMet) subsequently binds. Helps modulate mRNA selection, yielding the 30S pre-initiation complex (PIC). Upon addition of the 50S ribosomal subunit IF-1, IF-2 and IF-3 are released leaving the mature 70S translation initiation complex. The polypeptide is Translation initiation factor IF-1, chloroplastic (Hordeum vulgare (Barley)).